The primary structure comprises 130 residues: uncharacterized protein (130 aa).

This is an uncharacterized protein from Aedes vexans (Inland floodwater mosquito).